The following is a 104-amino-acid chain: L-rhamnose mutarotase (104 aa).

Substrate is bound at residue Tyr-18. His-22 serves as the catalytic Proton donor. Substrate is bound by residues Tyr-41 and 76 to 77 (WW).

It belongs to the rhamnose mutarotase family. In terms of assembly, homodimer.

Its subcellular location is the cytoplasm. It carries out the reaction alpha-L-rhamnose = beta-L-rhamnose. It participates in carbohydrate metabolism; L-rhamnose metabolism. Involved in the anomeric conversion of L-rhamnose. The chain is L-rhamnose mutarotase from Cronobacter sakazakii (strain ATCC BAA-894) (Enterobacter sakazakii).